The following is a 300-amino-acid chain: UPF0761 membrane protein PSHAa0171 (300 aa).

A run of 6 helical transmembrane segments spans residues 47–67 (LLSL…FPGF), 100–120 (NANQ…LLLI), 143–163 (FAVY…SIAV), 181–201 (FSGF…FIML), 215–235 (AIPG…GFAL), and 249–269 (AVAT…VVLL).

The protein belongs to the UPF0761 family.

It is found in the cell inner membrane. In Pseudoalteromonas translucida (strain TAC 125), this protein is UPF0761 membrane protein PSHAa0171.